A 152-amino-acid chain; its full sequence is SsrA-binding protein (152 aa).

The protein belongs to the SmpB family.

It localises to the cytoplasm. Required for rescue of stalled ribosomes mediated by trans-translation. Binds to transfer-messenger RNA (tmRNA), required for stable association of tmRNA with ribosomes. tmRNA and SmpB together mimic tRNA shape, replacing the anticodon stem-loop with SmpB. tmRNA is encoded by the ssrA gene; the 2 termini fold to resemble tRNA(Ala) and it encodes a 'tag peptide', a short internal open reading frame. During trans-translation Ala-aminoacylated tmRNA acts like a tRNA, entering the A-site of stalled ribosomes, displacing the stalled mRNA. The ribosome then switches to translate the ORF on the tmRNA; the nascent peptide is terminated with the 'tag peptide' encoded by the tmRNA and targeted for degradation. The ribosome is freed to recommence translation, which seems to be the essential function of trans-translation. This chain is SsrA-binding protein, found in Persephonella marina (strain DSM 14350 / EX-H1).